Here is a 1035-residue protein sequence, read N- to C-terminus: MASFNSQLKMETGLHERDRAGVQDFVLLENYQSEEAFIGNLKKRFQEDLIYTYIGQVLISVNPYKQLPIYTDDHVKAYRNKHFYEMPPHIFAVTDNAFRSLIEENRGQCVLISGESGSGKTEASKKVLQFIAACSGNQTTVEGVKDKLLKSNPVLEAFGNAKTNRNDNSSRFGKYMDIQFDFKGAPIGGNILNYLLEKSRVVAQMGGERNFHIFYQLLAGADEALLQELRLERALDTYSYLTDGLNGTVTRINDADSFKQVQQALTVIDFTKEEQREIFGIVASILHLGNVGFTEVEGNAKVNSRDLVVTAARLLGVNASELEAALTHRTIDARGDVVTSPLNQELAIYARDALAKAVYDRLFSWLVQRLNISLQAKETRASRNNVMGILDIYGFEIFQKNSFEQFCINFCNEKLQQLFIELTLKSEQDEYRREGIEWIPVEYFDNKVICNLIEEKHKGIISILDEECLRPGEPTDKTFLEKLTQKLAQHHHYVCHEKAPAHIKKIMLRDEFRLVHYAGEVTYSVNGFLDKNNDLLFRDLKETLSKAGNGIVRNCFPEKELRSLKRPETAITQFRASLNNLMDILMCKEPSYIRCIKPNDLQTANVFNDELVLHQVKYLGLMENLRVRRAGFAYRRTYELFLERYKSLSKSTWPNYKGPGGPKAGVQQLVKDLGWDEEKYRVGETKLFIRWPRTLFDTEDAYQEKKHEIAAIIQAHWKGLMQRRKYLKLRAQVIIMQSYCRRKLAQQAAKKRREAADKIRAFIKGFITRNDAPNGFNEEFIANAKRMWLLRLAKELPTKVLDKSWPHAPGHCEEASGILHRLHRLHLARIYRLKLTPQQKRQFELKVLAEKVFKGKKNNYASSVSTWFQEDRIPKEHIQRVNDFVASTFGSEQLKYQSFCTKFDRHGYKSRDRFILLSNKAIYVLDGKTYKQKHRLPLDKIDFTLTNHNDDLMVIRIPLDLKKDKGDLILIIPRIIEFSTYIIDTVGTASIVSIVDRNSLEHNVVKGKGGVIDIQTGAEPGVVRDKGHLVIIGTQ.

The Myosin motor domain maps to Gly21–Gln703. Gly114 to Thr121 provides a ligand contact to ATP. Phosphoserine is present on Ser304. Thr310 is modified (phosphothreonine). The interval Leu578–Asp600 is actin-binding. IQ domains follow at residues Phe696 to Lys728, Leu729 to Lys751, and Arg752 to Glu779. The 179-residue stretch at Lys857–Gln1035 folds into the TH1 domain.

This sequence belongs to the TRAFAC class myosin-kinesin ATPase superfamily. Myosin family. Binds F-actin. As to expression, in the embryo, expressed in gastric caeca, midgut cells of the proventriculus, and in the mid and hindgut. In the larval and adult gut brush border, expressed in the microvilli. Also expressed at high levels in follicle cells during oogenesis.

The protein resides in the cytoplasm. Its subcellular location is the cell cortex. It is found in the cell membrane. Unconventional myosin that functions as actin-based motor protein with ATPase activity. Binds to membranes enriched in phosphatidylinositol 4-5-bisphosphate, and can glide along actin filaments when anchored to a lipid bilayer. Functions as antagonist for Myo31DF, an unconventional myosin with an essential role in the establishment of body left-right asymmetry. The polypeptide is Unconventional myosin IC (Myo61F) (Drosophila melanogaster (Fruit fly)).